A 207-amino-acid polypeptide reads, in one-letter code: NADH-quinone oxidoreductase subunit A (207 aa).

Transmembrane regions (helical) follow at residues 6–26 (WSAI…LVVP), 62–82 (LVAI…AYAV), and 87–107 (AGWL…IGLV).

Belongs to the complex I subunit 3 family. NDH-1 is composed of 14 different subunits. Subunits NuoA, H, J, K, L, M, N constitute the membrane sector of the complex.

Its subcellular location is the cell inner membrane. The catalysed reaction is a quinone + NADH + 5 H(+)(in) = a quinol + NAD(+) + 4 H(+)(out). NDH-1 shuttles electrons from NADH, via FMN and iron-sulfur (Fe-S) centers, to quinones in the respiratory chain. The immediate electron acceptor for the enzyme in this species is believed to be ubiquinone. Couples the redox reaction to proton translocation (for every two electrons transferred, four hydrogen ions are translocated across the cytoplasmic membrane), and thus conserves the redox energy in a proton gradient. The chain is NADH-quinone oxidoreductase subunit A from Psychrobacter arcticus (strain DSM 17307 / VKM B-2377 / 273-4).